We begin with the raw amino-acid sequence, 204 residues long: Holliday junction branch migration complex subunit RuvA (204 aa).

The domain I stretch occupies residues 1-64 (MIGRLQGKLI…EDAHLLFGFS (64 aa)). The domain II stretch occupies residues 65–143 (TKTDRTLFRE…GLRQPDFFVE (79 aa)). A flexible linker region spans residues 144-155 (SKHITVPDIVSA). The segment at 156–204 (EKETPNDEAVAALVALGYKPPEAAKMVKKVANGDLTSEQLIREALKAAL) is domain III.

This sequence belongs to the RuvA family. In terms of assembly, homotetramer. Forms an RuvA(8)-RuvB(12)-Holliday junction (HJ) complex. HJ DNA is sandwiched between 2 RuvA tetramers; dsDNA enters through RuvA and exits via RuvB. An RuvB hexamer assembles on each DNA strand where it exits the tetramer. Each RuvB hexamer is contacted by two RuvA subunits (via domain III) on 2 adjacent RuvB subunits; this complex drives branch migration. In the full resolvosome a probable DNA-RuvA(4)-RuvB(12)-RuvC(2) complex forms which resolves the HJ.

It localises to the cytoplasm. The RuvA-RuvB-RuvC complex processes Holliday junction (HJ) DNA during genetic recombination and DNA repair, while the RuvA-RuvB complex plays an important role in the rescue of blocked DNA replication forks via replication fork reversal (RFR). RuvA specifically binds to HJ cruciform DNA, conferring on it an open structure. The RuvB hexamer acts as an ATP-dependent pump, pulling dsDNA into and through the RuvAB complex. HJ branch migration allows RuvC to scan DNA until it finds its consensus sequence, where it cleaves and resolves the cruciform DNA. In Actinobacillus succinogenes (strain ATCC 55618 / DSM 22257 / CCUG 43843 / 130Z), this protein is Holliday junction branch migration complex subunit RuvA.